Here is a 783-residue protein sequence, read N- to C-terminus: E3 UFM1-protein ligase 1 homolog (783 aa).

The disordered stretch occupies residues 406 to 476 (TLGTTHDADE…DAVQQSANSS (71 aa)). The segment covering 446–457 (KSTKKHQRGRAA) has biased composition (basic residues).

The protein belongs to the UFL1 family.

Its function is as follows. E3 UFM1-protein ligase that mediates ufmylation of target proteins. In Drosophila grimshawi (Hawaiian fruit fly), this protein is E3 UFM1-protein ligase 1 homolog.